The chain runs to 562 residues: 2-hydroxyisobutanoyl-CoA mutase large subunit (562 aa).

(3S)-3-hydroxybutanoyl-CoA is bound by residues 76–79 (YPTM), 86–88 (TMR), aspartate 117, 196–198 (TVQ), arginine 235, asparagine 240, histidine 245, and arginine 284.

This sequence belongs to the acyl-CoA mutase large subunit family. In terms of assembly, homotetramer composed of two large substrate-binding subunits (HcmA) and two small cobalamin-binding subunits (HcmB).

The enzyme catalyses 2-hydroxyisobutanoyl-CoA = (3S)-3-hydroxybutanoyl-CoA. Its function is as follows. Together with HcmB, catalyzes the isomerization of 2-hydroxyisobutyryl-CoA and 3-hydroxybutyryl-CoA. Is specific for 2-hydroxyisobutyryl-CoA and (S)-3-hydroxybutyryl-CoA, and shows only very low activity with (R)-3-hydroxybutyryl-CoA, isobutyryl-CoA and butyryl-CoA. In vitro, can isomerize pivalyl-CoA and isovaleryl-CoA, with much lower efficiency. Plays a central role in the degradation of substrates bearing a tert-butyl moiety, such as the fuel oxygenate methyl tert-butyl ether (MTBE) and its metabolites. This chain is 2-hydroxyisobutanoyl-CoA mutase large subunit, found in Aquincola tertiaricarbonis.